Consider the following 262-residue polypeptide: tRNA (guanine-N(1)-)-methyltransferase (262 aa).

S-adenosyl-L-methionine contacts are provided by residues Gly113 and Ile137 to Leu142.

The protein belongs to the RNA methyltransferase TrmD family. As to quaternary structure, homodimer.

Its subcellular location is the cytoplasm. The catalysed reaction is guanosine(37) in tRNA + S-adenosyl-L-methionine = N(1)-methylguanosine(37) in tRNA + S-adenosyl-L-homocysteine + H(+). Its function is as follows. Specifically methylates guanosine-37 in various tRNAs. The sequence is that of tRNA (guanine-N(1)-)-methyltransferase from Thermobifida fusca (strain YX).